Reading from the N-terminus, the 95-residue chain is MNVGVCYADADRQLWLRMEMPDDSTVEQAIRYSGILERFPEIDLSVQKVGIFGKLVKLDAPVKEGDRIEIYRPITADPKTVRRRKIASDDDDDDD.

Belongs to the UPF0125 (RnfH) family.

In Methylococcus capsulatus (strain ATCC 33009 / NCIMB 11132 / Bath), this protein is Protein RnfH.